The primary structure comprises 277 residues: S-formylglutathione hydrolase FrmB (277 aa).

Active-site charge relay system residues include S145, D221, and H254.

Belongs to the esterase D family.

The enzyme catalyses S-formylglutathione + H2O = formate + glutathione + H(+). In terms of biological role, serine hydrolase involved in the detoxification of formaldehyde. Hydrolyzes S-formylglutathione to glutathione and formate. This Escherichia coli O157:H7 protein is S-formylglutathione hydrolase FrmB (frmB).